The chain runs to 248 residues: Ubiquinone/menaquinone biosynthesis C-methyltransferase UbiE (248 aa).

S-adenosyl-L-methionine contacts are provided by S68 and D92.

The protein belongs to the class I-like SAM-binding methyltransferase superfamily. MenG/UbiE family.

The catalysed reaction is a 2-demethylmenaquinol + S-adenosyl-L-methionine = a menaquinol + S-adenosyl-L-homocysteine + H(+). It carries out the reaction a 2-methoxy-6-(all-trans-polyprenyl)benzene-1,4-diol + S-adenosyl-L-methionine = a 5-methoxy-2-methyl-3-(all-trans-polyprenyl)benzene-1,4-diol + S-adenosyl-L-homocysteine + H(+). Its pathway is quinol/quinone metabolism; menaquinone biosynthesis; menaquinol from 1,4-dihydroxy-2-naphthoate: step 2/2. It participates in cofactor biosynthesis; ubiquinone biosynthesis. Functionally, methyltransferase required for the conversion of demethylmenaquinol (DMKH2) to menaquinol (MKH2) and the conversion of 2-polyprenyl-6-methoxy-1,4-benzoquinol (DDMQH2) to 2-polyprenyl-3-methyl-6-methoxy-1,4-benzoquinol (DMQH2). The sequence is that of Ubiquinone/menaquinone biosynthesis C-methyltransferase UbiE from Rickettsia bellii (strain OSU 85-389).